A 390-amino-acid polypeptide reads, in one-letter code: 1-acyl-sn-glycerol-3-phosphate acyltransferase 2 (390 aa).

A helical transmembrane segment spans residues 2–22; the sequence is AMAAAVIVPLGILFFISGLVV. The short motif at 91 to 96 is the HXXXXD motif element; that stretch reads HRSDID. Transmembrane regions (helical) follow at residues 305-325 and 333-353; these read LAVV…FLHW and KGIA…QILI. Residues 358-390 are disordered; that stretch reads SERSTPAKVAPAKPKDNHQSGPSSQTEVEEKQK.

This sequence belongs to the 1-acyl-sn-glycerol-3-phosphate acyltransferase family.

The protein localises to the endoplasmic reticulum membrane. It carries out the reaction a 1-acyl-sn-glycero-3-phosphate + an acyl-CoA = a 1,2-diacyl-sn-glycero-3-phosphate + CoA. It functions in the pathway phospholipid metabolism; CDP-diacylglycerol biosynthesis; CDP-diacylglycerol from sn-glycerol 3-phosphate: step 2/3. Its function is as follows. Converts lysophosphatidic acid (LPA) into phosphatidic acid by incorporating acyl moiety at the 2 position. The protein is 1-acyl-sn-glycerol-3-phosphate acyltransferase 2 (LPAT2) of Brassica napus (Rape).